The chain runs to 484 residues: Calcium uniporter protein, mitochondrial (484 aa).

The transit peptide at M1–A33 directs the protein to the mitochondrion. At S34–H304 the chain is on the mitochondrial matrix side. 2 disordered regions span residues A59–L104 and Y188–W227. Residues Y61–S82 show a composition bias toward basic and acidic residues. The span at S83 to D93 shows a compositional bias: polar residues. A helical membrane pass occupies residues A305–F326. The Mitochondrial intermembrane segment spans residues H327–L334. The short motif at W332–Y340 is the Selectivity filter element. A helical transmembrane segment spans residues V335 to L355. Residue E336 coordinates Ca(2+). The Mitochondrial matrix segment spans residues F356 to D484. 2 stretches are compositionally biased toward basic and acidic residues: residues K426 to G435 and D452 to H462. The tract at residues K426–D484 is disordered.

The protein belongs to the MCU (TC 1.A.77) family. Homotetramer, assembles in a dimer or dimers configuration with two interfaces.

The protein resides in the mitochondrion inner membrane. It carries out the reaction Ca(2+)(in) = Ca(2+)(out). Its activity is regulated as follows. Inhibited by ruthenium red or its derivative Ru360. Functionally, highly selective calcium channel localized to the inner mitochondrial membrane, which mediates calcium uptake into the mitochondrial matrix. Mitochondrial calcium homeostasis plays key roles in cellular physiology and regulates ATP production, cytoplasmic calcium signals and activation of cell death pathways. Sufficient to operate as a pore-forming channel without the need of calcium-sensor or auxiliary subunit. The polypeptide is Calcium uniporter protein, mitochondrial (Metarhizium acridum (strain CQMa 102)).